The sequence spans 264 residues: Probable transcriptional regulatory protein PPA1157 (264 aa).

The protein belongs to the TACO1 family.

The protein localises to the cytoplasm. The sequence is that of Probable transcriptional regulatory protein PPA1157 from Cutibacterium acnes (strain DSM 16379 / KPA171202) (Propionibacterium acnes).